Here is a 144-residue protein sequence, read N- to C-terminus: Effector EagT6 (144 aa).

As to quaternary structure, homodimer. Two dimers interact with Tse6; this interaction is crucial for Tse6 loading onto VgrG1a.

Functionally, plays an essential role in toxin Tse6 delivery to target cells and specifically in the loading of Tse6 onto VgrG1a. The polypeptide is Effector EagT6 (Pseudomonas aeruginosa (strain ATCC 15692 / DSM 22644 / CIP 104116 / JCM 14847 / LMG 12228 / 1C / PRS 101 / PAO1)).